Here is an 88-residue protein sequence, read N- to C-terminus: Transcription factor ILI5 (88 aa).

The 54-residue stretch at 1–54 folds into the bHLH domain; that stretch reads MSSRRSSRGSISEEEINELISKLQSLLPNSRRRGSSQASTTKLLKETCNYIKSL.

The protein belongs to the bHLH protein family. In terms of assembly, interacts with APG.

It is found in the nucleus. Functionally, atypical and probable non DNA-binding bHLH transcription factor that acts as a positive regulator of grain size. Binds the transcription repressor APG and forms a heterodimer of antagonistic basic helix-loop-helix transcription factors that regulates grain length and weight by controlling cell elongation in lemma and palea. In Oryza sativa subsp. indica (Rice), this protein is Transcription factor ILI5 (ILI5).